The following is a 233-amino-acid chain: Tetrahydromethanopterin S-methyltransferase subunit D (233 aa).

6 consecutive transmembrane segments (helical) span residues 4–24 (LLLI…VHFV), 39–59 (VGTG…ITAA), 67–87 (LMIM…TMLV), 133–153 (FVSG…IYWA), 166–186 (MGAA…NAVI), and 209–229 (GIVA…LLVY).

This sequence belongs to the MtrD family. In terms of assembly, the complex is composed of 8 subunits; MtrA, MtrB, MtrC, MtrD, MtrE, MtrF, MtrG and MtrH.

The protein localises to the cell membrane. It carries out the reaction 5-methyl-5,6,7,8-tetrahydromethanopterin + coenzyme M + 2 Na(+)(in) = 5,6,7,8-tetrahydromethanopterin + methyl-coenzyme M + 2 Na(+)(out). Its pathway is one-carbon metabolism; methanogenesis from CO(2); methyl-coenzyme M from 5,10-methylene-5,6,7,8-tetrahydromethanopterin: step 2/2. Functionally, part of a complex that catalyzes the formation of methyl-coenzyme M and tetrahydromethanopterin from coenzyme M and methyl-tetrahydromethanopterin. This is an energy-conserving, sodium-ion translocating step. The sequence is that of Tetrahydromethanopterin S-methyltransferase subunit D from Methanothermobacter marburgensis (strain ATCC BAA-927 / DSM 2133 / JCM 14651 / NBRC 100331 / OCM 82 / Marburg) (Methanobacterium thermoautotrophicum).